The following is a 460-amino-acid chain: Diguanylate cyclase DosC (460 aa).

H98 provides a ligand contact to heme. The region spanning 325 to 458 is the GGDEF domain; the sequence is TPLSVLIIDV…GRNRVELWKA (134 aa). Residue D333 participates in Mg(2+) binding. Substrate-binding residues include N341 and D350. A Mg(2+)-binding site is contributed by D376. The active-site Proton acceptor is the D376.

Heme serves as cofactor. It depends on Mg(2+) as a cofactor.

It catalyses the reaction 2 GTP = 3',3'-c-di-GMP + 2 diphosphate. It participates in purine metabolism; 3',5'-cyclic di-GMP biosynthesis. Its function is as follows. Globin-coupled heme-based oxygen sensor protein displaying diguanylate cyclase (DGC) activity in response to oxygen availability. Thus, catalyzes the synthesis of cyclic diguanylate (c-di-GMP) via the condensation of 2 GTP molecules. Cyclic-di-GMP is a second messenger which controls cell surface-associated traits in bacteria. The polypeptide is Diguanylate cyclase DosC (dosC) (Shigella sonnei (strain Ss046)).